We begin with the raw amino-acid sequence, 362 residues long: Protein mom-2 (362 aa).

The signal sequence occupies residues 1 to 24 (MHINTPVLLAIIYFLVFAPKSADA). Intrachain disulfides connect Cys-80/Cys-91, Cys-129/Cys-137, Cys-139/Cys-167, Cys-217/Cys-231, and Cys-219/Cys-226. A glycan (N-linked (GlcNAc...) asparagine) is linked at Asn-90. Residue Ser-223 is the site of O-palmitoleoyl serine; by mom-1 attachment. The disordered stretch occupies residues 263–282 (TVRSSPSAGSSGRSERFARN). Low complexity predominate over residues 265–274 (RSSPSAGSSG). 6 disulfide bridges follow: Cys-304–Cys-322, Cys-313–Cys-317, Cys-321–Cys-361, Cys-337–Cys-352, Cys-339–Cys-349, and Cys-344–Cys-345.

It belongs to the Wnt family. Post-translationally, palmitoleoylation is required for efficient binding to frizzled receptors. Depalmitoleoylation leads to Wnt signaling pathway inhibition. As to expression, expressed by anchor cell and vulva precursor cell descendants P5.ppa, P5.ppp, P7.paa and P7.pap. Expressed in the tail and weakly expressed in the vulva and body wall muscles.

Its subcellular location is the secreted. The protein localises to the extracellular space. The protein resides in the extracellular matrix. Ligand for members of the frizzled family of seven transmembrane receptors. Required in embryonic development for endoderm specification and the correct positioning and orientation of the mitotic spindles and division planes in blastomere cells. Involved in cleavage axis determination. Binds to receptor tyrosine kinase cam-1. Together with wnt ligand lin-44, plays a role in controlling vulva precursor cell P7.p lineage orientation during vulva development, probably by acting as a ligand for tyrosine kinase receptor lin-18. May act redundantly with other Wnt ligands such as cwn-1 and cwn-2 to control seam cell polarity. This chain is Protein mom-2 (mom-2), found in Caenorhabditis elegans.